A 244-amino-acid chain; its full sequence is Tegument protein UL51 (244 aa).

Cys9 is lipidated: S-palmitoyl cysteine; by host. Residues 178–244 form a disordered region; the sequence is GVTEAPSLGH…SRAAPCVLGQ (67 aa). A compositionally biased stretch (low complexity) spans 221 to 244; that stretch reads PRPTASPTAPRPGPSRAAPCVLGQ.

The protein belongs to the herpesviridae UL51 family. As to quaternary structure, oligomerizes. Interacts with UL7; this interaction mediates UL7 incorporation to virions. Interacts with UL14. In terms of processing, phosphorylated. Post-translationally, palmitoylation is necessary for Golgi localization.

The protein localises to the virion tegument. It localises to the host cytoplasm. The protein resides in the host Golgi apparatus. Functionally, plays several roles during the time course of infection, including egress of virus particles from the perinuclear space and secondary envelopment of cytoplasmic capsids that bud into specific trans-Golgi network (TGN)-derived membranes. Plays also an essential role in the maintenance of host cytoplasmic viral assembly center (cVAC) morphology in primary host neuronal cells. The protein is Tegument protein UL51 of Homo sapiens (Human).